We begin with the raw amino-acid sequence, 104 residues long: ATP-dependent Clp protease adapter protein ClpS (104 aa).

It belongs to the ClpS family. In terms of assembly, binds to the N-terminal domain of the chaperone ClpA.

Its function is as follows. Involved in the modulation of the specificity of the ClpAP-mediated ATP-dependent protein degradation. This chain is ATP-dependent Clp protease adapter protein ClpS, found in Burkholderia ambifaria (strain MC40-6).